A 305-amino-acid polypeptide reads, in one-letter code: Olfactory receptor 4F5 (305 aa).

At 1-18 the chain is on the extracellular side; sequence MVTEFIFLGLSDSQELQT. Residues 19 to 42 traverse the membrane as a helical segment; sequence FLFMLFFVFYGGIVFGNLLIVITV. Residues 43 to 50 lie on the Cytoplasmic side of the membrane; sequence VSDSHLHS. The chain crosses the membrane as a helical span at residues 51–72; the sequence is PMYFLLANLSLIDLSLSSVTAP. The Extracellular segment spans residues 73–93; it reads KMITDFFSQRKVISFKGCLVQ. Cys90 and Cys182 are oxidised to a cystine. A helical transmembrane segment spans residues 94–113; the sequence is IFLLHFFGGSEMVILIAMGF. Over 114-132 the chain is Cytoplasmic; that stretch reads DRYIAICKPLHYTTIMCGN. A helical membrane pass occupies residues 133 to 151; sequence ACVGIMAVTWGIGFLHSVS. The Extracellular segment spans residues 152-188; it reads QLAFAVHLLFCGPNEVDSFYCDLPRVIKLACTDTYRL. The helical transmembrane segment at 189–212 threads the bilayer; the sequence is DIMVIANSGVLTVCSFVLLIISYT. The Cytoplasmic segment spans residues 213–228; sequence IILMTIQHRPLDKSSK. The chain crosses the membrane as a helical span at residues 229–251; it reads ALSTLTAHITVVLLFFGPCVFIY. Residues 252 to 262 are Extracellular-facing; that stretch reads AWPFPIKSLDK. A helical membrane pass occupies residues 263–282; it reads FLAVFYSVITPLLNPIIYTL. Residues 283 to 305 are Cytoplasmic-facing; that stretch reads RNKDMKTAIRQLRKWDAHSSVKF.

It belongs to the G-protein coupled receptor 1 family.

Its subcellular location is the cell membrane. Functionally, odorant receptor. This chain is Olfactory receptor 4F5 (OR4F5), found in Homo sapiens (Human).